The following is a 393-amino-acid chain: Envelope glycoprotein D (393 aa).

The first 25 residues, 1-25, serve as a signal peptide directing secretion; the sequence is MGGAAARLGAVILFVVIVGLHGVRG. The interval 25-57 is interaction with TNFRSF14; it reads GKYALADASLKMADPNRFRGKDLPVLDQLTDPP. Residues 26-338 are Virion surface-facing; the sequence is KYALADASLK…PYHPPATPNN (313 aa). His-64 is a Zn(2+) binding site. Intrachain disulfides connect Cys-90/Cys-213, Cys-130/Cys-226, and Cys-142/Cys-151. Residues Asn-118 and Asn-145 are each glycosylated (N-linked (GlcNAc...) asparagine; by host). Position 239 (Asp-239) interacts with Zn(2+). Positions 260 to 304 are profusion; it reads LKIAGWHGPRAPYTSTLLPPELPETPNATQPELAPEDPEDSALLE. Residues 273–300 are disordered; the sequence is TSTLLPPELPETPNATQPELAPEDPEDS. The N-linked (GlcNAc...) asparagine; by host glycan is linked to Asn-286. The chain crosses the membrane as a helical span at residues 339–363; sequence MGLIAGAVGGSLLAALVICGIVYWM. Residues 364 to 393 lie on the Intravirion side of the membrane; that stretch reads RRRTRKAPKRIRLPHIREDDQPSSHQPLFY.

The protein belongs to the herpesviridae glycoprotein D family. In terms of assembly, homodimer. Interacts with host receptor TNFRSF14. Interacts with host receptor NECTIN1. Interacts (via profusion domain) with gB; this interaction occurs in the absence of gH/gL. Interacts (via profusion domain) with gH/gL heterodimer; this interaction occurs in the absence of gB. Associates with the gB-gH/gL-gD complex. Interacts (via C-terminus) with UL11 tegument protein. Interacts with host RSAD2.

The protein resides in the virion membrane. It is found in the host Golgi apparatus. Its function is as follows. Envelope glycoprotein that binds to the host cell entry receptors NECTIN1, TNFRSF14/HVEM and 3-O-sulfated heparan sulfate, promoting the virus entry into host cells. May trigger fusion with host membrane, by recruiting the fusion machinery composed of gB and gH/gL. In Homo sapiens (Human), this protein is Envelope glycoprotein D (gD).